The chain runs to 194 residues: MKYGFTKEELLVFGKYDPSEVQISDPALESYICLEPKYVPHNHGRHANVPFAKQKVFIVERLINKVMRKGHNTGKKILAYNIVKEAFEIIEKKTKKNPIQVLVDAIINAGPREEVVRLKYGGIAVPKAVDTSSSRRVDIALRNIAEGARRAAFKSKRSIAQCLADEIIAAANNESRSFAVAKKEEVERVAKSAR.

It belongs to the universal ribosomal protein uS7 family. In terms of assembly, part of the 30S ribosomal subunit.

Its function is as follows. One of the primary rRNA binding proteins, it binds directly to 16S rRNA where it nucleates assembly of the head domain of the 30S subunit. Is located at the subunit interface close to the decoding center. The polypeptide is Small ribosomal subunit protein uS7 (Archaeoglobus fulgidus (strain ATCC 49558 / DSM 4304 / JCM 9628 / NBRC 100126 / VC-16)).